Consider the following 1218-residue polypeptide: NACHT, LRR and PYD domains-containing protein 1a allele 4 (1218 aa).

Positions 1–29 (MGESQSKQESNTRVAQHGSQQDVDPTFQT) are enriched in polar residues. Disordered stretches follow at residues 1 to 44 (MGES…QVEQ) and 71 to 91 (EMDH…DRSE). Basic residues predominate over residues 77–87 (RRHSHQSKKKL). One can recognise an NACHT domain in the interval 175 to 484 (QLVIIEGAAG…EFFAAMSYIL (310 aa)). ATP is bound at residue 181–188 (GAAGIGKS). 3 LRR repeats span residues 343-364 (KERN…LTLC), 673-693 (NLEE…RSLC), and 730-750 (RLAE…RQLC). A compositionally biased stretch (polar residues) spans 799-815 (TMPTENTDGEESLTSSK). The segment at 799–842 (TMPTENTDGEESLTSSKQQQQQSGDKHMEPLGTDDDFWGPSGPV) is disordered. The ZU5 stretch occupies residues 835–968 (FWGPSGPVST…HFAVLENPSF (134 aa)). Residues 835-1118 (FWGPSGPVST…LRPALPRMAS (284 aa)) form the FIIND domain. The UPA stretch occupies residues 969-1118 (SPMGVLLRMI…LRPALPRMAS (150 aa)). The region spanning 1122–1211 (DAPALLHFVD…HLIMDLLEKS (90 aa)) is the CARD domain.

It belongs to the NLRP family. As to quaternary structure, interacts (via LRR repeats) with BCL2 and BCL2L1 (via the loop between motifs BH4 and BH3). Interacts with NOD2; this interaction is enhanced in the presence of muramyl dipeptide (MDP) and increases IL1B release. Interacts with EIF2AK2/PKR; this interaction requires EIF2AK2 activity, is accompanied by EIF2AK2 autophosphorylation and promotes inflammasome assembly in response to danger-associated signals. Interacts with MEFV; this interaction targets Nlrp1a to degradation by autophagy, hence preventing excessive IL1B- and IL18-mediated inflammation. Interacts with DPP9; leading to inhibit activation of the inflammasome. DPP9 acts via formation of a ternary complex, composed of a DPP9 homodimer, one full-length NLRP1 protein, and one cleaved C-terminus of Nlrp1a (NACHT, LRR and PYD domains-containing protein 1a, C-terminus). Interacts with DPP8; leading to inhibit activation of the inflammasome, probably via formation of a ternary complex with DPP8. In terms of assembly, interacts with the C-terminal part of Nlrp1a (NACHT, LRR and PYD domains-containing protein 1a, C-terminus) in absence of pathogens and other damage-associated signals. Interacts with the N-terminal part of Nlrp1a (NACHT, LRR and PYD domains-containing protein 1a, N-terminus) in absence of pathogens and other damage-associated signals. Homomultimer; forms the Nlrp1a inflammasome polymeric complex, a filament composed of homopolymers of this form in response to pathogens and other damage-associated signals. The Nlrp1a inflammasome polymeric complex directly recruits pro-caspase-1 (proCASP1) independently of PYCARD/ASC. Interacts (via CARD domain) with CASP1 (via CARD domain); leading to CASP1 activation. Post-translationally, autocatalytically cleaved. Autocatalytic cleavage in FIIND region occurs constitutively, prior to activation signals, and is required for inflammasome activity (IL1B release), possibly by facilitating CASP1 binding. Both N- and C-terminal parts remain associated non-covalently. In terms of processing, ubiquitinated in response to pathogen-associated signals, leading to its degradation by the proteasome and subsequent release of the cleaved C-terminal part of the protein (NACHT, LRR and PYD domains-containing protein 1a, C-terminus), which polymerizes and forms the Nlrp1a inflammasome.

The protein resides in the cytoplasm. Its subcellular location is the cytosol. The protein localises to the nucleus. It localises to the inflammasome. With respect to regulation, activated by pathogens and other damage-associated signals: activation promotes ubiquitination and degradation of the N-terminal part, releasing the cleaved C-terminal part of the protein (NACHT, LRR and PYD domains-containing protein 1a, C-terminus), which polymerizes and forms the Nlrp1a inflammasome. Nlrp1a inflammasome is inhibited by DPP8 and DPP9, which sequester the C-terminal fragment of Nlrp1a (NACHT, LRR and PYD domains-containing protein 1a, C-terminus) in a ternary complex, thereby preventing Nlrp1a oligomerization and activation. Nlrp1a inflammasome is strongly activated by Val-boroPro (Talabostat, PT-100), an inhibitor of dipeptidyl peptidases DPP8 and DPP9. Val-boroPro relieves inhibition of DPP8 and/or DPP9 by promoting disruption of the ternary complex, releasing its C-terminal part from autoinhibition. Not activated by cleavage by B.anthracis lethal toxin (LT) endopeptidase. Functionally, acts as the sensor component of the Nlrp1a inflammasome, which mediates inflammasome activation in response to various pathogen-associated signals, leading to subsequent pyroptosis. Inflammasomes are supramolecular complexes that assemble in the cytosol in response to pathogens and other damage-associated signals and play critical roles in innate immunity and inflammation. Acts as a recognition receptor (PRR): recognizes specific pathogens and other damage-associated signals, such as Val-boroPro inhibitor, and mediates the formation of the inflammasome polymeric complex. In response to pathogen-associated signals, the N-terminal part of Nlrp1a is degraded by the proteasome, releasing the cleaved C-terminal part of the protein (NACHT, LRR and PYD domains-containing protein 1a, C-terminus), which polymerizes to initiate the formation of the inflammasome complex: the inflammasome directly recruits pro-caspase-1 (proCASP1) independently of PYCARD/ASC and promotes caspase-1 (CASP1) activation, which subsequently cleaves and activates inflammatory cytokines IL1B and IL18 and gasdermin-D (GSDMD), leading to pyroptosis. In the absence of GSDMD expression, the Nlrp1a inflammasome is able to recruit and activate CASP8, leading to activation of gasdermin-E (GSDME). In terms of biological role, constitutes the precursor of the Nlrp1a inflammasome, which mediates autoproteolytic processing within the FIIND domain to generate the N-terminal and C-terminal parts, which are associated non-covalently in absence of pathogens and other damage-associated signals. Its function is as follows. Regulatory part that prevents formation of the Nlrp1a inflammasome: in absence of pathogens and other damage-associated signals, interacts with the C-terminal part of Nlrp1a (NACHT, LRR and PYD domains-containing protein 1a, C-terminus), preventing activation of the Nlrp1a inflammasome. In response to pathogen-associated signals, this part is ubiquitinated by the N-end rule pathway and degraded by the proteasome, releasing the cleaved C-terminal part of the protein, which polymerizes and forms the Nlrp1a inflammasome. Constitutes the active part of the Nlrp1a inflammasome. In absence of pathogens and other damage-associated signals, interacts with the N-terminal part of Nlrp1a (NACHT, LRR and PYD domains-containing protein 1a, N-terminus), preventing activation of the Nlrp1a inflammasome. In response to pathogen-associated signals, the N-terminal part of Nlrp1a is degraded by the proteasome, releasing this form, which polymerizes to form the Nlrp1a inflammasome complex: the Nlrp1a inflammasome complex then directly recruits pro-caspase-1 (proCASP1) and promotes caspase-1 (CASP1) activation, leading to gasdermin-D (GSDMD) cleavage and subsequent pyroptosis. This Rattus norvegicus (Rat) protein is NACHT, LRR and PYD domains-containing protein 1a allele 4.